Here is a 533-residue protein sequence, read N- to C-terminus: Subtilisin-like serine protease pepC (533 aa).

An N-terminal signal peptide occupies residues 1–16 (MKGILGLSLLPLLTAA). The Inhibitor I9 domain occupies 43–136 (SYIVVFKKHV…IERDSEVHTM (94 aa)). Positions 145 to 450 (PWGLARISHR…VGIYKRNELT (306 aa)) constitute a Peptidase S8 domain. Residues Asp-181 and His-213 each act as charge relay system in the active site. N-linked (GlcNAc...) asparagine glycosylation is present at Asn-283. Residues Cys-320 and Cys-351 are joined by a disulfide bond. Ser-379 (charge relay system) is an active-site residue. N-linked (GlcNAc...) asparagine glycosylation is present at Asn-435. Over residues 496-513 (KSCSPRSLVPSTARSRMP) the composition is skewed to polar residues. The tract at residues 496 to 519 (KSCSPRSLVPSTARSRMPSSHRSE) is disordered.

The protein belongs to the peptidase S8 family.

In Aspergillus niger, this protein is Subtilisin-like serine protease pepC (pepC).